The following is a 293-amino-acid chain: Microtubule-associated protein RP/EB family member 1B (293 aa).

Residues 13–115 (FVGRNEILSW…FLQWLKRFCD (103 aa)) form the Calponin-homology (CH) domain. Disordered regions lie at residues 124–188 (ENYN…SAEV) and 262–293 (LGLE…ETQT). A compositionally biased stretch (basic and acidic residues) spans 129–141 (VERRSRGGREKSV). Residues 151–166 (LQTNNMHHPPVATSNK) are compositionally biased toward polar residues. The EB1 C-terminal domain maps to 180 to 250 (GGSNSSAEVQ…LYATDANESV (71 aa)). Acidic residues predominate over residues 266–285 (GYEEEGKEEEEEEEEEEEEA).

Belongs to the MAPRE family. In terms of assembly, homodimer and heterodimer with EB1A. As to expression, highly expressed in guard cells of leaf stomata, pollen grains and pollen tubes. Expressed in young roots.

The protein localises to the cytoplasm. Its subcellular location is the cytoskeleton. It is found in the spindle pole. It localises to the phragmoplast. Functionally, binds to the plus end of microtubules and regulates the dynamics of the microtubule cytoskeleton. May be involved in anchoring microtubules to their nucleation sites and/or functioning as a reservoir for distribution to the growing end. In plants, microtubule minus ends are not necessarily severed from the nucleation site and transported to the plus end of a microtubule as part of the recycling process. May play a role in endomembrane organization during polarized growth of plant cells. The polypeptide is Microtubule-associated protein RP/EB family member 1B (EB1B) (Arabidopsis thaliana (Mouse-ear cress)).